Here is a 261-residue protein sequence, read N- to C-terminus: tRNA pseudouridine synthase A (261 aa).

The Nucleophile role is filled by aspartate 51. Position 109 (tyrosine 109) interacts with substrate.

The protein belongs to the tRNA pseudouridine synthase TruA family. In terms of assembly, homodimer.

It catalyses the reaction uridine(38/39/40) in tRNA = pseudouridine(38/39/40) in tRNA. Formation of pseudouridine at positions 38, 39 and 40 in the anticodon stem and loop of transfer RNAs. The chain is tRNA pseudouridine synthase A from Shewanella pealeana (strain ATCC 700345 / ANG-SQ1).